We begin with the raw amino-acid sequence, 428 residues long: Serine--tRNA ligase (428 aa).

An L-serine-binding site is contributed by 236-238; that stretch reads TAE. 267-269 provides a ligand contact to ATP; the sequence is RSE. Residue E290 coordinates L-serine. 354–357 contributes to the ATP binding site; sequence EISS. S388 serves as a coordination point for L-serine.

This sequence belongs to the class-II aminoacyl-tRNA synthetase family. Type-1 seryl-tRNA synthetase subfamily. Homodimer. The tRNA molecule binds across the dimer.

Its subcellular location is the cytoplasm. The enzyme catalyses tRNA(Ser) + L-serine + ATP = L-seryl-tRNA(Ser) + AMP + diphosphate + H(+). It carries out the reaction tRNA(Sec) + L-serine + ATP = L-seryl-tRNA(Sec) + AMP + diphosphate + H(+). It participates in aminoacyl-tRNA biosynthesis; selenocysteinyl-tRNA(Sec) biosynthesis; L-seryl-tRNA(Sec) from L-serine and tRNA(Sec): step 1/1. Catalyzes the attachment of serine to tRNA(Ser). Is also able to aminoacylate tRNA(Sec) with serine, to form the misacylated tRNA L-seryl-tRNA(Sec), which will be further converted into selenocysteinyl-tRNA(Sec). In Psychrobacter cryohalolentis (strain ATCC BAA-1226 / DSM 17306 / VKM B-2378 / K5), this protein is Serine--tRNA ligase.